The following is a 90-amino-acid chain: MANTKSAEKRIRANARRALRNKMYRSRVKTAIKKAERAIFAGTPNAELVREAMSLLDRAAVKGIIHKNNAARRKSRLAKKFAKATAASPS.

This sequence belongs to the bacterial ribosomal protein bS20 family.

Functionally, binds directly to 16S ribosomal RNA. This chain is Small ribosomal subunit protein bS20, found in Roseiflexus sp. (strain RS-1).